The primary structure comprises 129 residues: Large-conductance mechanosensitive channel (129 aa).

2 consecutive transmembrane segments (helical) span residues 10 to 30 and 76 to 96; these read FAVK…GAFG and GAFI…FGMV.

It belongs to the MscL family. Homopentamer.

It localises to the cell inner membrane. Functionally, channel that opens in response to stretch forces in the membrane lipid bilayer. May participate in the regulation of osmotic pressure changes within the cell. The protein is Large-conductance mechanosensitive channel of Actinobacillus pleuropneumoniae serotype 5b (strain L20).